Consider the following 341-residue polypeptide: Phenylalanine--tRNA ligase alpha subunit (341 aa).

Position 254 (glutamate 254) interacts with Mg(2+).

The protein belongs to the class-II aminoacyl-tRNA synthetase family. Phe-tRNA synthetase alpha subunit type 1 subfamily. Tetramer of two alpha and two beta subunits. Requires Mg(2+) as cofactor.

The protein resides in the cytoplasm. The catalysed reaction is tRNA(Phe) + L-phenylalanine + ATP = L-phenylalanyl-tRNA(Phe) + AMP + diphosphate + H(+). The sequence is that of Phenylalanine--tRNA ligase alpha subunit from Chlorobaculum tepidum (strain ATCC 49652 / DSM 12025 / NBRC 103806 / TLS) (Chlorobium tepidum).